A 251-amino-acid polypeptide reads, in one-letter code: Aquaporin (251 aa).

Topologically, residues 1-11 (MAGETLRKIQS) are cytoplasmic. The chain crosses the membrane as a helical span at residues 12 to 32 (LLGEMVASFIFGFAVYSAILG). At 33-42 (STIAQQPAAK) the chain is on the extracellular side. The chain crosses the membrane as a helical span at residues 43–63 (VIIGLTVGFSAIGIIYSFSDV). Over 64–86 (TIAHFNPAITLAAILTGKMGILC) the chain is Cytoplasmic. The NPA signature appears at 69 to 71 (NPA). Residues 87-107 (GLGYMLAQCVGFILAVCALLV) form a helical membrane-spanning segment. Residues 108-133 (CSPVGYKETLNVIRPAPAPFGADNLN) are Extracellular-facing. The helical transmembrane segment at 134-154 (VFFTEFFLTAILVHIAFAVAV) threads the bilayer. Residues 155-179 (NPYRPKVDTDGKFVDPDEKEPVDRR) lie on the Cytoplasmic side of the membrane. The chain crosses the membrane as a helical span at residues 180 to 200 (ITAPLCIGLTLGFLAFMGLVT). The Extracellular segment spans residues 201–224 (SGGAFNPGLTLAPVIMSNTWQHFW). The short motif at 206–208 (NPG) is the NPG element. The helical transmembrane segment at 225–245 (LYLGAQYLGGLVGGLLQVFVL) threads the bilayer. Residues 246–251 (YKLSSN) are Cytoplasmic-facing.

It belongs to the MIP/aquaporin (TC 1.A.8) family.

It is found in the cell membrane. In terms of biological role, water channel required to facilitate the transport of water across membranes. Involved in osmotolerance. This Encephalitozoon hellem (Microsporidian parasite) protein is Aquaporin (AQP).